The sequence spans 198 residues: A-type ATP synthase subunit E (198 aa).

It belongs to the V-ATPase E subunit family. As to quaternary structure, has multiple subunits with at least A(3), B(3), C, D, E, F, H, I and proteolipid K(x).

It is found in the cell membrane. Functionally, component of the A-type ATP synthase that produces ATP from ADP in the presence of a proton gradient across the membrane. In Pyrococcus furiosus (strain ATCC 43587 / DSM 3638 / JCM 8422 / Vc1), this protein is A-type ATP synthase subunit E.